Consider the following 205-residue polypeptide: Small ribosomal subunit protein uS4 (205 aa).

Residues 1 to 49 (MSKRQSAKYKLDRRMGENIWGRPKSPVNRREYGPGQHGQRRKGKLSDFG) are disordered. In terms of domain architecture, S4 RNA-binding spans 94-157 (SRLDAIVFRA…KQLTVVLESV (64 aa)).

Belongs to the universal ribosomal protein uS4 family. Part of the 30S ribosomal subunit. Contacts protein S5. The interaction surface between S4 and S5 is involved in control of translational fidelity.

Its function is as follows. One of the primary rRNA binding proteins, it binds directly to 16S rRNA where it nucleates assembly of the body of the 30S subunit. Functionally, with S5 and S12 plays an important role in translational accuracy. The sequence is that of Small ribosomal subunit protein uS4 from Chelativorans sp. (strain BNC1).